An 89-amino-acid chain; its full sequence is Small ribosomal subunit protein uS15 (89 aa).

Belongs to the universal ribosomal protein uS15 family. As to quaternary structure, part of the 30S ribosomal subunit. Forms a bridge to the 50S subunit in the 70S ribosome, contacting the 23S rRNA.

Its function is as follows. One of the primary rRNA binding proteins, it binds directly to 16S rRNA where it helps nucleate assembly of the platform of the 30S subunit by binding and bridging several RNA helices of the 16S rRNA. Forms an intersubunit bridge (bridge B4) with the 23S rRNA of the 50S subunit in the ribosome. This Treponema denticola (strain ATCC 35405 / DSM 14222 / CIP 103919 / JCM 8153 / KCTC 15104) protein is Small ribosomal subunit protein uS15.